The following is a 491-amino-acid chain: Iota-carrageenase (491 aa).

A signal peptide spans 1-19 (MKLQFKPVYLASIAIMAIG). Cysteine 422 and cysteine 490 form a disulfide bridge.

The protein belongs to the glycosyl hydrolase 82 family.

The protein resides in the secreted. The enzyme catalyses Endohydrolysis of 1,4-beta-D-linkages between D-galactose 4-sulfate and 3,6-anhydro-D-galactose-2-sulfate in iota-carrageenans.. Its function is as follows. Hydrolyzes iota-carrageenans, sulfated 1,3-alpha-1,4-beta galactans from red algal cell walls, with an inversion of anomeric configuration. Also active against hybrid iota-/nu-carrageenan, not active against kappa- or lambda-carrageenans. The protein is Iota-carrageenase of Zobellia galactanivorans (strain DSM 12802 / CCUG 47099 / CIP 106680 / NCIMB 13871 / Dsij).